The chain runs to 688 residues: Glycine--tRNA ligase beta subunit (688 aa).

Belongs to the class-II aminoacyl-tRNA synthetase family. As to quaternary structure, tetramer of two alpha and two beta subunits.

The protein resides in the cytoplasm. The catalysed reaction is tRNA(Gly) + glycine + ATP = glycyl-tRNA(Gly) + AMP + diphosphate. The sequence is that of Glycine--tRNA ligase beta subunit from Shewanella sp. (strain ANA-3).